Consider the following 143-residue polypeptide: Small ribosomal subunit protein uS9 (143 aa).

A disordered region spans residues 124 to 143 (PEPKKFGGKGARARFQKSYR). Residues 134 to 143 (ARARFQKSYR) show a composition bias toward basic residues.

Belongs to the universal ribosomal protein uS9 family.

The sequence is that of Small ribosomal subunit protein uS9 (RPS16) from Candida glabrata (strain ATCC 2001 / BCRC 20586 / JCM 3761 / NBRC 0622 / NRRL Y-65 / CBS 138) (Yeast).